A 244-amino-acid polypeptide reads, in one-letter code: Adenosylcobinamide-GDP ribazoletransferase (244 aa).

Transmembrane regions (helical) follow at residues 31–51 (LLCY…ASHL), 55–75 (APAP…SGAL), 109–129 (IAVV…WVLV), 133–153 (AGAL…GLFL), and 188–208 (LLLG…VFLW).

The protein belongs to the CobS family. Requires Mg(2+) as cofactor.

The protein resides in the cell inner membrane. The enzyme catalyses alpha-ribazole + adenosylcob(III)inamide-GDP = adenosylcob(III)alamin + GMP + H(+). It catalyses the reaction alpha-ribazole 5'-phosphate + adenosylcob(III)inamide-GDP = adenosylcob(III)alamin 5'-phosphate + GMP + H(+). It functions in the pathway cofactor biosynthesis; adenosylcobalamin biosynthesis; adenosylcobalamin from cob(II)yrinate a,c-diamide: step 7/7. Joins adenosylcobinamide-GDP and alpha-ribazole to generate adenosylcobalamin (Ado-cobalamin). Also synthesizes adenosylcobalamin 5'-phosphate from adenosylcobinamide-GDP and alpha-ribazole 5'-phosphate. The chain is Adenosylcobinamide-GDP ribazoletransferase from Pseudomonas putida (strain W619).